The following is a 252-amino-acid chain: UPF0246 protein LJ_0535 (252 aa).

Belongs to the UPF0246 family.

The polypeptide is UPF0246 protein LJ_0535 (Lactobacillus johnsonii (strain CNCM I-12250 / La1 / NCC 533)).